The sequence spans 306 residues: Putative F-box protein At1g47300 (306 aa).

The region spanning 1 to 45 (MISDSIPKELILEIMLRLPAKSIARFHCVSKQWASMLSRPYFTEL) is the F-box domain. The segment at 235 to 278 (DPKLLESKEEEEEEEEEEEEEEEEEEEEEEEEEEEESKEREKEK) is disordered. Residues 242–270 (KEEEEEEEEEEEEEEEEEEEEEEEEEEEE) are compositionally biased toward acidic residues.

This chain is Putative F-box protein At1g47300, found in Arabidopsis thaliana (Mouse-ear cress).